Reading from the N-terminus, the 784-residue chain is MKKRIPTLLATMIATALYSQQGLAADLASQCMLGVPSYDRPLVQGDTNDLPVTINADHAKGDYPDDAVFTGSVDIMQGNSRLQADEVQLHQKEAPGQPEPVRTVDALGNVHYDDNQVILKGPKGWANLNTKDTNVWEGDYQMVGRQGRGKADLMKQRGENRYTILDNGSFTSCLPGSDTWSVVGSEIIHDREEQVAEIWNARFKVGPVPIFYSPYLQLPVGDKRRSGFLIPNAKYTTTNYFEFYLPYYWNIAPNMDATITPHYMHRRGNIMWENEFRYLSQAGAGLMELDYLPSDKVYEDEHPNDDSSRRWLFYWNHSGVMDQVWRFNVDYTKVSDPSYFNDFDNKYGSSTDGYATQKFSVGYAVQNFNATVSTKQFQVFSEQNTSSYSAEPQLDVNYYQNDVGPFDTRIYGQAVHFVNTRDDMPEATRVHLEPTINLPLSNNWGSINTEAKFLATHYQQTNLDWYNSRNTTKLDESVNRVMPQFKVDGKMVFERDMEMLAPGYTQTLEPRAQYLYVPYRDQSDIYNYDSSLLQSDYSGLFRDRTYGGLDRIASANQVTTGVTSRIYDDAAVERFNISVGQIYYFTESRTGDDNITWENDDKTGSLVWAGDTYWRISERWGLRGGIQYDTRLDNVATSNSSIEYRRDEDRLVQLNYHYASPEYIQATLPKYYSTAEQYKNGISQVGAVASRPIADRWSIVGAYYYDTNANKQADSMLGVQYSSCCYAIRVGYERKLNGWDNDKQHAVYDNAIGFNIELRGLSSNYGLGTQEMLRSNILPYQNTL.

The signal sequence occupies residues 1-24 (MKKRIPTLLATMIATALYSQQGLA). 2 disulfide bridges follow: Cys-31-Cys-724 and Cys-173-Cys-725.

This sequence belongs to the LptD family. Component of the lipopolysaccharide transport and assembly complex. Interacts with LptE and LptA. In terms of processing, contains two intramolecular disulfide bonds.

Its subcellular location is the cell outer membrane. Its function is as follows. Together with LptE, is involved in the assembly of lipopolysaccharide (LPS) at the surface of the outer membrane. The sequence is that of LPS-assembly protein LptD from Shigella flexneri.